The primary structure comprises 252 residues: Phosphoglycolate phosphatase (252 aa).

Asp-13 acts as the Nucleophile in catalysis. Asp-13, Asp-15, and Asp-192 together coordinate Mg(2+).

Belongs to the HAD-like hydrolase superfamily. CbbY/CbbZ/Gph/YieH family. As to quaternary structure, monomer. Mg(2+) is required as a cofactor. It depends on chloride as a cofactor.

It catalyses the reaction 2-phosphoglycolate + H2O = glycolate + phosphate. It functions in the pathway organic acid metabolism; glycolate biosynthesis; glycolate from 2-phosphoglycolate: step 1/1. Functionally, specifically catalyzes the dephosphorylation of 2-phosphoglycolate. Is involved in the dissimilation of the intracellular 2-phosphoglycolate formed during the DNA repair of 3'-phosphoglycolate ends, a major class of DNA lesions induced by oxidative stress. The sequence is that of Phosphoglycolate phosphatase from Shigella flexneri.